Reading from the N-terminus, the 289-residue chain is Bis(5'-nucleosyl)-tetraphosphatase, symmetrical (289 aa).

Belongs to the Ap4A hydrolase family.

It carries out the reaction P(1),P(4)-bis(5'-adenosyl) tetraphosphate + H2O = 2 ADP + 2 H(+). Hydrolyzes diadenosine 5',5'''-P1,P4-tetraphosphate to yield ADP. The sequence is that of Bis(5'-nucleosyl)-tetraphosphatase, symmetrical from Yersinia pestis bv. Antiqua (strain Antiqua).